The sequence spans 1345 residues: Membrane-anchored lipid-binding protein LAM4 (1345 aa).

Residues 1–1197 lie on the Cytoplasmic side of the membrane; the sequence is MTRDSKKKHH…NFSSEIFMNK (1197 aa). 7 disordered regions span residues 51-80, 115-134, 139-164, 190-302, 356-397, 425-447, and 489-531; these read RVGGNPDIPSLLKPETFTESPAKGSQKAAA, SLKGRFQDGNSNSNSVPSLS, EKEKLQSGKREGSSNQAEEKTPDGHD, DADN…SLDD, LPEA…KPRR, SFNSSNGLTNNDPEYEDREPREM, and STII…NGRQ. The residue at position 66 (Thr66) is a Phosphothreonine. Positions 216–228 are enriched in low complexity; sequence SENSTNNKNTSST. Over residues 246–271 the composition is skewed to polar residues; that stretch reads SKSSTPSNQQLNTTEAGSKSKPSSLS. Residues 283–294 are compositionally biased toward low complexity; it reads HSNSHSSSNAIS. Positions 425 to 436 are enriched in polar residues; sequence SFNSSNGLTNND. The span at 498 to 516 shows a compositional bias: low complexity; it reads SNGRPSSGLRRSSSKSFSS. Residues 549–616 enclose the GRAM domain; sequence EFHAIFKDSG…FKTIVQIEKR (68 aa). Positions 665–677 are enriched in low complexity; it reads SNSNNTNSSSNSI. A disordered region spans residues 665–722; it reads SNSNNTNSSSNSISDDENDDYDDDYDDYGDDDDDLYDNSNNISDSTDMTSSVSIGKPE. A compositionally biased stretch (acidic residues) spans 678 to 700; sequence SDDENDDYDDDYDDYGDDDDDLY. Ser747 carries the post-translational modification Phosphoserine. 2 VASt domains span residues 758–930 and 967–1139; these read NEKL…TRSA and DDSI…SRAK. A disordered region spans residues 930–963; sequence ATKRKRSSKENTVTVSTLPKMEPSSHAPTEPDIQ. A compositionally biased stretch (basic residues) spans 1141–1158; the sequence is KKPVKKVMKSHDKHRPFH. A disordered region spans residues 1141–1172; it reads KKPVKKVMKSHDKHRPFHSKVEQKSSESRKSD. Residues 1159–1172 show a composition bias toward basic and acidic residues; the sequence is SKVEQKSSESRKSD. A helical transmembrane segment spans residues 1198–1218; sequence LLSPQKLFLILGLTIMLFWSP. Residues 1219–1345 are Lumenal-facing; sequence RLHVFQEKNN…NIERDANDLS (127 aa).

Belongs to the YSP2 family.

The protein resides in the endoplasmic reticulum membrane. Functionally, may be involved in sterol transfer between intracellular membranes. In Saccharomyces cerevisiae (strain ATCC 204508 / S288c) (Baker's yeast), this protein is Membrane-anchored lipid-binding protein LAM4.